We begin with the raw amino-acid sequence, 1114 residues long: Lysylphosphatidylglycerol biosynthesis bifunctional protein LysX (1114 aa).

The segment covering 1-11 (MSASTETHHAS) has biased composition (basic and acidic residues). Residues 1 to 28 (MSASTETHHASEAAVPTAPRPRPALGSK) form a disordered region. Residues 1-618 (MSASTETHHA…GLHSDGSAPG (618 aa)) form a phosphatidylglycerol lysyltransferase region. Helical transmembrane passes span 38-58 (IAGL…ISPV), 77-97 (APDT…ALAS), 101-121 (IAWW…VIVS), 126-146 (NVNA…LVAA), 164-184 (GVLI…VELF), and 219-239 (FVNT…VITL). Residues 619 to 1114 (EGLAPTATGP…LAFPLAKPRQ (496 aa)) form a lysine--tRNA ligase region. Residues 674-751 (VRIAGRLLRI…LSLLANEWRM (78 aa)) constitute a DNA-binding region (OB). Asp1025 and Glu1032 together coordinate Mg(2+).

This sequence in the N-terminal section; belongs to the LPG synthetase family. The protein in the C-terminal section; belongs to the class-II aminoacyl-tRNA synthetase family. Mg(2+) serves as cofactor.

The protein resides in the cell membrane. It carries out the reaction tRNA(Lys) + L-lysine + ATP = L-lysyl-tRNA(Lys) + AMP + diphosphate. It catalyses the reaction L-lysyl-tRNA(Lys) + a 1,2-diacyl-sn-glycero-3-phospho-(1'-sn-glycerol) = a 1,2-diacyl-sn-glycero-3-phospho-1'-(3'-O-L-lysyl)-sn-glycerol + tRNA(Lys). Functionally, catalyzes the production of L-lysyl-tRNA(Lys)transfer and the transfer of a lysyl group from L-lysyl-tRNA(Lys) to membrane-bound phosphatidylglycerol (PG), which produces lysylphosphatidylglycerol (LPG), one of the components of the bacterial membrane with a positive net charge. LPG synthesis contributes to the resistance to cationic antimicrobial peptides (CAMPs) and likely protects M.tuberculosis against the CAMPs produced by competiting microorganisms (bacteriocins). In fact, the modification of anionic phosphatidylglycerol with positively charged L-lysine results in repulsion of the peptides. This Rhodococcus opacus (strain B4) protein is Lysylphosphatidylglycerol biosynthesis bifunctional protein LysX (lysX).